The chain runs to 469 residues: Bifunctional protein GlmU (469 aa).

Positions Met-1–Arg-237 are pyrophosphorylase. Residues Leu-12–Gly-15, Lys-26, Gln-78, Gly-83–Thr-84, Ser-105–Asp-107, Gly-144, Glu-162, Asn-177, and Asn-235 each bind UDP-N-acetyl-alpha-D-glucosamine. Asp-107 contacts Mg(2+). A Mg(2+)-binding site is contributed by Asn-235. Positions Gln-238–Ala-258 are linker. The interval Gly-259–Lys-469 is N-acetyltransferase. Residues Arg-341 and Lys-359 each coordinate UDP-N-acetyl-alpha-D-glucosamine. His-371 (proton acceptor) is an active-site residue. UDP-N-acetyl-alpha-D-glucosamine contacts are provided by Tyr-374 and Asn-385. Acetyl-CoA is bound by residues Ala-388, Asn-394–Tyr-395, Ser-413, Ala-431, and Arg-448.

It in the N-terminal section; belongs to the N-acetylglucosamine-1-phosphate uridyltransferase family. The protein in the C-terminal section; belongs to the transferase hexapeptide repeat family. Homotrimer. Mg(2+) is required as a cofactor.

It is found in the cytoplasm. The enzyme catalyses alpha-D-glucosamine 1-phosphate + acetyl-CoA = N-acetyl-alpha-D-glucosamine 1-phosphate + CoA + H(+). It catalyses the reaction N-acetyl-alpha-D-glucosamine 1-phosphate + UTP + H(+) = UDP-N-acetyl-alpha-D-glucosamine + diphosphate. Its pathway is nucleotide-sugar biosynthesis; UDP-N-acetyl-alpha-D-glucosamine biosynthesis; N-acetyl-alpha-D-glucosamine 1-phosphate from alpha-D-glucosamine 6-phosphate (route II): step 2/2. It functions in the pathway nucleotide-sugar biosynthesis; UDP-N-acetyl-alpha-D-glucosamine biosynthesis; UDP-N-acetyl-alpha-D-glucosamine from N-acetyl-alpha-D-glucosamine 1-phosphate: step 1/1. It participates in bacterial outer membrane biogenesis; LPS lipid A biosynthesis. Catalyzes the last two sequential reactions in the de novo biosynthetic pathway for UDP-N-acetylglucosamine (UDP-GlcNAc). The C-terminal domain catalyzes the transfer of acetyl group from acetyl coenzyme A to glucosamine-1-phosphate (GlcN-1-P) to produce N-acetylglucosamine-1-phosphate (GlcNAc-1-P), which is converted into UDP-GlcNAc by the transfer of uridine 5-monophosphate (from uridine 5-triphosphate), a reaction catalyzed by the N-terminal domain. The polypeptide is Bifunctional protein GlmU (Koribacter versatilis (strain Ellin345)).